We begin with the raw amino-acid sequence, 285 residues long: Undecaprenyl-diphosphatase (285 aa).

7 consecutive transmembrane segments (helical) span residues 40–60 (GPLI…VYFF), 89–109 (LFWW…AIKL), 137–157 (DLIA…DWLG), 171–191 (GLIV…RSGV), 209–229 (FSFL…VPEI), 241–261 (LIAG…LMNF), and 265–285 (ASML…LAFF).

It belongs to the UppP family.

It is found in the cell inner membrane. The catalysed reaction is di-trans,octa-cis-undecaprenyl diphosphate + H2O = di-trans,octa-cis-undecaprenyl phosphate + phosphate + H(+). In terms of biological role, catalyzes the dephosphorylation of undecaprenyl diphosphate (UPP). Confers resistance to bacitracin. The polypeptide is Undecaprenyl-diphosphatase (Erythrobacter litoralis (strain HTCC2594)).